Here is a 225-residue protein sequence, read N- to C-terminus: ATP-dependent Clp protease proteolytic subunit (225 aa).

S123 functions as the Nucleophile in the catalytic mechanism. H148 is an active-site residue.

The protein belongs to the peptidase S14 family. As to quaternary structure, fourteen ClpP subunits assemble into 2 heptameric rings which stack back to back to give a disk-like structure with a central cavity, resembling the structure of eukaryotic proteasomes.

It is found in the cytoplasm. It catalyses the reaction Hydrolysis of proteins to small peptides in the presence of ATP and magnesium. alpha-casein is the usual test substrate. In the absence of ATP, only oligopeptides shorter than five residues are hydrolyzed (such as succinyl-Leu-Tyr-|-NHMec, and Leu-Tyr-Leu-|-Tyr-Trp, in which cleavage of the -Tyr-|-Leu- and -Tyr-|-Trp bonds also occurs).. Its function is as follows. Cleaves peptides in various proteins in a process that requires ATP hydrolysis. Has a chymotrypsin-like activity. Plays a major role in the degradation of misfolded proteins. The protein is ATP-dependent Clp protease proteolytic subunit of Chlorobaculum tepidum (strain ATCC 49652 / DSM 12025 / NBRC 103806 / TLS) (Chlorobium tepidum).